The following is a 143-amino-acid chain: Beta/delta-urticatoxin-Uf2a (143 aa).

An N-terminal signal peptide occupies residues 1-18; it reads MGAIVLVALMALVASSSA. A propeptide spanning residues 19-80 is cleaved from the precursor; it reads FSDIEHNIMK…MMLSGRPQPN (62 aa). Disulfide bonds link cysteine 83–cysteine 100, cysteine 90–cysteine 105, cysteine 99–cysteine 113, cysteine 115–cysteine 129, cysteine 122–cysteine 134, and cysteine 128–cysteine 142.

This sequence belongs to the urticatoxin-2 family. In terms of tissue distribution, expressed in trichomes, that are stiff epidermal hairs located on the surface of petioles and leaves.

It localises to the secreted. In terms of biological role, plant defense neurotoxin that causes pain and systemic symptoms in mammals via modulation of voltage-gated sodium channels (Nav). Potent modulator of human Nav1.5/SCN5A (EC(50)=55 nM), Nav1.6/SCN8A (EC(50)=0.86 nM), and Nav1.7/SCN9A (EC(50)=208 nM), where it shifts the activation threshold to more negative potentials and delays fast inactivation. Also shifts the voltage-dependence of steady-state fast inactivation of Nav1.6/SCN8A, but not that of Nav1.5/SCN5A or Nav1.7/SCN9A. On Nav1.7/SCN9A, principally acts by binding to extracellular loops of domain IV (Nav site 3). Does not affect current response of the tetrodotoxin (TTX)-resistant Nav1.8/SCN10A sodium channel. In vivo, intraplantar injection into mice causes numerous dose-dependent, immediate, and long-lasting spontaneous pain behaviors, while no swelling is observed in the injected paw. At the highest doses tested, systemic symptoms including hypokinesia and hypersalivation are observed. The polypeptide is Beta/delta-urticatoxin-Uf2a (Urtica ferox (Tree nettle)).